The chain runs to 155 residues: MKTPKMNVESFNLDHTKVKAPYVRVADRKKGANGDVIVKYDVRFKQPNQDHMDMPSLHSLEHLVAEIIRNHASYVVDWSPMGCQTGFYLTVLNHDNYTEILEVLEKTMQDVLKAKEVPASNEKQCGWAANHTLEGAQNLARTFLDKRAEWSEVGV.

Fe cation contacts are provided by His-58, His-62, and Cys-125.

This sequence belongs to the LuxS family. Homodimer. Fe cation serves as cofactor.

The enzyme catalyses S-(5-deoxy-D-ribos-5-yl)-L-homocysteine = (S)-4,5-dihydroxypentane-2,3-dione + L-homocysteine. Involved in the synthesis of autoinducer 2 (AI-2) which is secreted by bacteria and is used to communicate both the cell density and the metabolic potential of the environment. The regulation of gene expression in response to changes in cell density is called quorum sensing. Catalyzes the transformation of S-ribosylhomocysteine (RHC) to homocysteine (HC) and 4,5-dihydroxy-2,3-pentadione (DPD). The sequence is that of S-ribosylhomocysteine lyase from Helicobacter pylori (strain HPAG1).